The following is a 777-amino-acid chain: Elongation factor G, mitochondrial (777 aa).

The tr-type G domain occupies 34–338 (LRQRNVGISA…GMCAYLPNPM (305 aa)). GTP is bound by residues 43–50 (AHIDSGKT), 136–140 (DTPGH), and 190–193 (NKMD).

Belongs to the TRAFAC class translation factor GTPase superfamily. Classic translation factor GTPase family. EF-G/EF-2 subfamily.

It is found in the mitochondrion. The protein operates within protein biosynthesis; polypeptide chain elongation. Functionally, mitochondrial GTPase that catalyzes the GTP-dependent ribosomal translocation step during translation elongation. During this step, the ribosome changes from the pre-translocational (PRE) to the post-translocational (POST) state as the newly formed A-site-bound peptidyl-tRNA and P-site-bound deacylated tRNA move to the P and E sites, respectively. Catalyzes the coordinated movement of the two tRNA molecules, the mRNA and conformational changes in the ribosome. The protein is Elongation factor G, mitochondrial of Malassezia globosa (strain ATCC MYA-4612 / CBS 7966) (Dandruff-associated fungus).